The chain runs to 872 residues: Translation initiation factor IF-2 (872 aa).

The segment covering 130–155 (AEEEAARAAEEEAARLAEEEAARRAA) has biased composition (basic and acidic residues). Residues 130-282 (AEEEAARAAE…RERERLKHMQ (153 aa)) are disordered. Residues 156–181 (EPQSEPEAAAPAAEPVAPTAPVAAAP) show a composition bias toward low complexity. Residues 182–194 (APAPATPVAPAQP) are compositionally biased toward pro residues. Over residues 195-211 (KPVAAAAPAGDATAVPR) the composition is skewed to low complexity. A compositionally biased stretch (basic and acidic residues) spans 271–282 (RARERERLKHMQ). One can recognise a tr-type G domain in the interval 371 to 539 (TRPPVVTVMG…AILLQAEILD (169 aa)). The segment at 380–387 (GHVDHGKT) is G1. 380–387 (GHVDHGKT) contributes to the GTP binding site. Positions 405–409 (GITQH) are G2. A G3 region spans residues 427-430 (DTPG). Residues 427-431 (DTPGH) and 481-484 (NKID) each bind GTP. Positions 481 to 484 (NKID) are G4. The G5 stretch occupies residues 517–519 (SAK).

Belongs to the TRAFAC class translation factor GTPase superfamily. Classic translation factor GTPase family. IF-2 subfamily.

The protein resides in the cytoplasm. Its function is as follows. One of the essential components for the initiation of protein synthesis. Protects formylmethionyl-tRNA from spontaneous hydrolysis and promotes its binding to the 30S ribosomal subunits. Also involved in the hydrolysis of GTP during the formation of the 70S ribosomal complex. The protein is Translation initiation factor IF-2 of Paramagnetospirillum magneticum (strain ATCC 700264 / AMB-1) (Magnetospirillum magneticum).